Consider the following 735-residue polypeptide: Peroxisomal multifunctional enzyme type 2 (735 aa).

A (3R)-hydroxyacyl-CoA dehydrogenase region spans residues 1 to 305 (MASPLRFDGR…VEVLHKVDSE (305 aa)). NAD(+)-binding positions include 13-37 (LVTGAGGGLGRAYALAFAERGALVI), leucine 21, and aspartate 40. Position 46 is an N6-acetyllysine; alternate (lysine 46). At lysine 46 the chain carries N6-succinyllysine; alternate. Position 52 is a phosphoserine (serine 52). N6-succinyllysine occurs at positions 57 and 68. An NAD(+)-binding site is contributed by 75 to 76 (SV). Lysine 84 carries the post-translational modification N6-succinyllysine. Residue asparagine 99 coordinates NAD(+). Residue serine 151 coordinates substrate. Tyrosine 164 serves as the catalytic Proton acceptor. Residues 164–168 (YSAAK) and 196–199 (AGSR) each bind NAD(+). Residue threonine 265 is modified to Phosphothreonine. Lysine 275 carries the N6-succinyllysine modification. Residues serine 304 and serine 308 each carry the phosphoserine modification. The tract at residues 321-621 (SGFVGAVGHK…TQTPSEGGEL (301 aa)) is enoyl-CoA hydratase 2. The residue at position 355 (lysine 355) is an N6-succinyllysine. 405–406 (HG) provides a ligand contact to (3R)-3-hydroxydecanoyl-CoA. An N6-succinyllysine modification is found at lysine 423. Residues lysine 434, 509 to 514 (DWNPLH), glycine 532, and phenylalanine 562 contribute to the (3R)-3-hydroxydecanoyl-CoA site. Residues 483 to 599 (VPNRPPDAVL…HETGDVVISN (117 aa)) form the MaoC-like domain. Lysine 564 is modified (N6-acetyllysine). N6-succinyllysine occurs at positions 578 and 662. The 113-residue stretch at 623–735 (SALVFGEIGR…QMILKDYAKL (113 aa)) folds into the SCP2 domain. At lysine 668 the chain carries N6-acetyllysine. Residue glutamine 705 participates in substrate binding. Position 706 is an N6-acetyllysine (lysine 706). Glutamine 723 provides a ligand contact to substrate. Lysine 724 bears the N6-succinyllysine mark. Residues 733–735 (AKL) carry the Microbody targeting signal motif.

The protein belongs to the short-chain dehydrogenases/reductases (SDR) family. In terms of assembly, homodimer. In terms of tissue distribution, present in many tissues with highest concentrations in liver and kidney.

The protein localises to the peroxisome. The catalysed reaction is a (3R)-3-hydroxyacyl-CoA + NAD(+) = a 3-oxoacyl-CoA + NADH + H(+). The enzyme catalyses (24R,25R)-3alpha,7alpha,12alpha,24-tetrahydroxy-5beta-cholestan-26-oyl-CoA = (24E)-3alpha,7alpha,12alpha-trihydroxy-5beta-cholest-24-en-26-oyl-CoA + H2O. It catalyses the reaction a (3R)-3-hydroxyacyl-CoA = a (2E)-enoyl-CoA + H2O. It carries out the reaction (2E)-octenoyl-CoA + H2O = (3R)-hydroxyoctanoyl-CoA. The catalysed reaction is (3R)-hydroxyoctanoyl-CoA + NAD(+) = 3-oxooctanoyl-CoA + NADH + H(+). The enzyme catalyses (3R)-hydroxyhexadecanoyl-CoA + NAD(+) = 3-oxohexadecanoyl-CoA + NADH + H(+). It catalyses the reaction (2E)-hexadecenedioyl-CoA + H2O = (3R)-hydroxyhexadecanedioyl-CoA. It carries out the reaction (3R)-hydroxyhexadecanedioyl-CoA + NAD(+) = 3-oxohexadecanedioyl-CoA + NADH + H(+). The catalysed reaction is (3R)-hydroxyhexadecanoyl-CoA = (2E)-hexadecenoyl-CoA + H2O. The enzyme catalyses (3R)-3-hydroxydecanoyl-CoA = (2E)-decenoyl-CoA + H2O. It catalyses the reaction (3R)-3-hydroxydecanoyl-CoA + NAD(+) = 3-oxodecanoyl-CoA + NADH + H(+). It carries out the reaction (24R,25R)-3alpha,7alpha,12alpha,24-tetrahydroxy-5beta-cholestan-26-oyl-CoA + NAD(+) = 3alpha,7alpha,12alpha-trihydroxy-24-oxo-5beta-cholestan-26-oyl-CoA + NADH + H(+). Its pathway is lipid metabolism; fatty acid beta-oxidation. Functionally, bifunctional enzyme acting on the peroxisomal fatty acid beta-oxidation pathway. Catalyzes two of the four reactions in fatty acid degradation: hydration of 2-enoyl-CoA (trans-2-enoyl-CoA) to produce (3R)-3-hydroxyacyl-CoA, and dehydrogenation of (3R)-3-hydroxyacyl-CoA to produce 3-ketoacyl-CoA (3-oxoacyl-CoA), which is further metabolized by SCPx. Can use straight-chain and branched-chain fatty acids, as well as bile acid intermediates as substrates. The protein is Peroxisomal multifunctional enzyme type 2 of Mus musculus (Mouse).